The sequence spans 1203 residues: Cingulin (1203 aa).

The segment at 7-357 (MAEPRGPVDH…VMISSGSTKA (351 aa)) is head. Positions 25–48 (EPVSGAEMGTLRRGGRRPAKDARA) are disordered. The short motif at 48-62 (ASTYGVAVRVQGIAG) is the ZIM element. An interaction with TJP1/ZO1 region spans residues 54–67 (AVRVQGIAGQPFVV). The tract at residues 89-268 (EASGALGSDF…PPSGFSRSRQ (180 aa)) is disordered. A phosphoserine mark is found at Ser96, Ser135, Ser137, Ser140, Ser155, and Ser165. Positions 166 to 191 (PGSTIDTAPLSSVDSLINKFDSQLGG) are enriched in polar residues. The segment covering 207–231 (EQRKRSKSLDSRLPRDTLEERERQS) has biased composition (basic and acidic residues). Residues Ser214, Ser217, Ser258, Ser276, Ser338, and Ser351 each carry the phosphoserine modification. Residues 246–267 (GSSKQPSQSQSPSPPSGFSRSR) show a composition bias toward low complexity. Residues 358–1160 (VAGQGELTRK…SLEKDSWRKA (803 aa)) are a coiled coil. Position 579 is an N6-acetyllysine (Lys579). Residues 883–903 (ARREVADAQRQAKDWASEAEK) are compositionally biased toward basic and acidic residues. Disordered stretches follow at residues 883-908 (ARRE…SGGL) and 1160-1181 (ASRS…EEFD). The interval 1161-1203 (SRSAAESALKHEGLSSDEEFDSVYDPSSIASLLTESNLQTSSC) is tail. A phosphoserine mark is found at Ser1175, Ser1176, and Ser1182.

Belongs to the cingulin family. As to quaternary structure, homodimer. Interacts with TJP1/ZO1 and SPEF1.

It localises to the cell junction. The protein resides in the tight junction. Functionally, probably plays a role in the formation and regulation of the tight junction (TJ) paracellular permeability barrier. This Papio anubis (Olive baboon) protein is Cingulin.